The chain runs to 138 residues: uncharacterized protein (138 aa).

The interval 84–104 (PPKKTSPATSSSLKPRPGPRG) is disordered. A compositionally biased stretch (low complexity) spans 85–98 (PKKTSPATSSSLKP).

It to M.pneumoniae MPN_413 and MPN_463.

This is an uncharacterized protein from Mycoplasma pneumoniae (strain ATCC 29342 / M129 / Subtype 1) (Mycoplasmoides pneumoniae).